The chain runs to 279 residues: Tryptophan synthase alpha chain (279 aa).

Catalysis depends on proton acceptor residues E50 and D61.

Belongs to the TrpA family. Tetramer of two alpha and two beta chains.

The catalysed reaction is (1S,2R)-1-C-(indol-3-yl)glycerol 3-phosphate + L-serine = D-glyceraldehyde 3-phosphate + L-tryptophan + H2O. Its pathway is amino-acid biosynthesis; L-tryptophan biosynthesis; L-tryptophan from chorismate: step 5/5. Its function is as follows. The alpha subunit is responsible for the aldol cleavage of indoleglycerol phosphate to indole and glyceraldehyde 3-phosphate. The sequence is that of Tryptophan synthase alpha chain from Azorhizobium caulinodans (strain ATCC 43989 / DSM 5975 / JCM 20966 / LMG 6465 / NBRC 14845 / NCIMB 13405 / ORS 571).